We begin with the raw amino-acid sequence, 101 residues long: Small ribosomal subunit protein uS14 (101 aa).

A disordered region spans residues 51-72 (LPRDSSPSRQRNPCRQTGRPHG). The span at 52–65 (PRDSSPSRQRNPCR) shows a compositional bias: polar residues.

Belongs to the universal ribosomal protein uS14 family. In terms of assembly, part of the 30S ribosomal subunit. Contacts proteins S3 and S10.

Binds 16S rRNA, required for the assembly of 30S particles and may also be responsible for determining the conformation of the 16S rRNA at the A site. This Buchnera aphidicola subsp. Acyrthosiphon kondoi (Acyrthosiphon kondoi symbiotic bacterium) protein is Small ribosomal subunit protein uS14.